We begin with the raw amino-acid sequence, 440 residues long: Origin recognition complex subunit 4 (440 aa).

Residue 64–71 coordinates ATP; the sequence is GPKGSGKS.

Belongs to the ORC4 family. In terms of assembly, ORC is composed of six subunits.

The protein resides in the nucleus. Functionally, component of the origin recognition complex (ORC) that binds origins of replication. DNA-binding is ATP-dependent, however specific DNA sequences that define origins of replication have not been identified so far. ORC is required to assemble the pre-replication complex necessary to initiate DNA replication. The sequence is that of Origin recognition complex subunit 4 (orcD) from Dictyostelium discoideum (Social amoeba).